We begin with the raw amino-acid sequence, 111 residues long: Phosphoribosyl-ATP pyrophosphatase (111 aa).

It belongs to the PRA-PH family.

It is found in the cytoplasm. It carries out the reaction 1-(5-phospho-beta-D-ribosyl)-ATP + H2O = 1-(5-phospho-beta-D-ribosyl)-5'-AMP + diphosphate + H(+). It participates in amino-acid biosynthesis; L-histidine biosynthesis; L-histidine from 5-phospho-alpha-D-ribose 1-diphosphate: step 2/9. This is Phosphoribosyl-ATP pyrophosphatase from Pseudomonas putida (strain ATCC 700007 / DSM 6899 / JCM 31910 / BCRC 17059 / LMG 24140 / F1).